We begin with the raw amino-acid sequence, 521 residues long: GMP synthase [glutamine-hydrolyzing] (521 aa).

One can recognise a Glutamine amidotransferase type-1 domain in the interval 5–197 (KILILDFGSQ…VLDICGAQPG (193 aa)). The active-site Nucleophile is Cys81. Catalysis depends on residues His171 and Glu173. A GMPS ATP-PPase domain is found at 198 to 390 (WTMPNYIEEA…LGLPREMVYR (193 aa)). 225 to 231 (SGGVDSS) contacts ATP.

As to quaternary structure, homodimer.

The catalysed reaction is XMP + L-glutamine + ATP + H2O = GMP + L-glutamate + AMP + diphosphate + 2 H(+). It participates in purine metabolism; GMP biosynthesis; GMP from XMP (L-Gln route): step 1/1. Functionally, catalyzes the synthesis of GMP from XMP. The sequence is that of GMP synthase [glutamine-hydrolyzing] from Neisseria gonorrhoeae (strain NCCP11945).